The primary structure comprises 490 residues: MERLPHGRRDRSGGCRPHLAPGRAAAPASAARSVSSGIPVSATFLRPPGLFLRSTASSGRAGCAPGPGLDRALGAVGCGYPRTPKCARCRNHGVVSALKGHKRFCRWRDCACAKCTLIAERQRVMAAQVALRRQQAQEESEARGLHRLLYQGSSGSGAQASGGSGRTESPQVLNNPMAVAVLGAGASRHPGSRSVPTFEVFQQDYADRKQEPKQRNCESCQSRQEEPVSNTHHHSLGSSKGNVTVEKQGFMSSIPEHPDKSTIILSPCPTDQSGGEDSPRSFSSSDLESGNESEWARDYIATRASLSTVTSRPRDPLGILTRIFPGYKHSRLEGILQFCKGDVVQAIEQILNGREHKPDCRDLARADLENAAFQRASDFSLAGIGFGTLSNKSALSPLEAASAAYGGDSTLYSFNPRLAFSPLRLAYSSPGRALSGFVSPYLTPGLVPALPFRPTLDYAFPGMIREPSHLPSKHLVAGGRLYFRPNQEHL.

Positions 1–13 (MERLPHGRRDRSG) are enriched in basic and acidic residues. Positions 1–31 (MERLPHGRRDRSGGCRPHLAPGRAAAPASAA) are disordered. The span at 20-31 (APGRAAAPASAA) shows a compositional bias: low complexity. A DNA-binding region (DM) is located at residues 86-133 (CARCRNHGVVSALKGHKRFCRWRDCACAKCTLIAERQRVMAAQVALRR). Disordered stretches follow at residues 152–171 (GSSG…ESPQ) and 207–289 (DRKQ…DLES). Residues 207 to 216 (DRKQEPKQRN) are compositionally biased toward basic and acidic residues. 2 stretches are compositionally biased toward polar residues: residues 217-242 (CESC…SKGN) and 269-289 (PTDQ…DLES). In terms of domain architecture, DMA spans 314 to 349 (RDPLGILTRIFPGYKHSRLEGILQFCKGDVVQAIEQ).

It belongs to the DMRT family. Widely expressed, with highest levels in ovary, testis, epididymis, preputial gland, vomeronasal organ, liver, salivary glands and heart. Also expressed throughout the brain with highest levels in the olfactory bulbs and medulla. Detected at similar levels in gonads of both sexes.

It localises to the nucleus. This is Doublesex- and mab-3-related transcription factor A1 (Dmrta1) from Mus musculus (Mouse).